The following is a 747-amino-acid chain: DNA ligase 1 (747 aa).

The tract at residues 1-84 is disordered; sequence MQKSITSFFK…KEVDDKTTDK (84 aa). Residues S18, S20, S42, S44, S46, S60, and S65 each carry the phosphoserine modification. A compositionally biased stretch (basic and acidic residues) spans 26-42; the sequence is PKIDAKTELPDEPHIKS. Positions 60–84 are enriched in basic and acidic residues; it reads SEEKTSPVKNVKKEPKEVDDKTTDK. Residue K395 is the N6-AMP-lysine intermediate of the active site. The span at 725 to 740 shows a compositional bias: polar residues; sequence QSQDQVKNNQKSSTQM. The segment at 725–747 is disordered; the sequence is QSQDQVKNNQKSSTQMEMEDEFY.

This sequence belongs to the ATP-dependent DNA ligase family.

The protein resides in the nucleus. It catalyses the reaction ATP + (deoxyribonucleotide)n-3'-hydroxyl + 5'-phospho-(deoxyribonucleotide)m = (deoxyribonucleotide)n+m + AMP + diphosphate.. Its function is as follows. DNA ligase that seals nicks in double-stranded DNA during DNA replication, DNA recombination and DNA repair. This Drosophila melanogaster (Fruit fly) protein is DNA ligase 1.